The following is a 246-amino-acid chain: Proteasome subunit alpha type-6 (246 aa).

It belongs to the peptidase T1A family. As to quaternary structure, the 26S proteasome consists of a 20S proteasome core and two 19S regulatory subunits. The 20S proteasome core is composed of 28 subunits that are arranged in four stacked rings, resulting in a barrel-shaped structure. The two end rings are each formed by seven alpha subunits, and the two central rings are each formed by seven beta subunits. The catalytic chamber with the active sites is on the inside of the barrel.

It is found in the cytoplasm. Its subcellular location is the nucleus. The proteasome is a multicatalytic proteinase complex which is characterized by its ability to cleave peptides with Arg, Phe, Tyr, Leu, and Glu adjacent to the leaving group at neutral or slightly basic pH. The proteasome has an ATP-dependent proteolytic activity. The sequence is that of Proteasome subunit alpha type-6 (pas-1) from Caenorhabditis elegans.